Here is a 351-residue protein sequence, read N- to C-terminus: Transmembrane protein 184 homolog DDB_G0279555 (351 aa).

Residues 1 to 21 (MWIVAGVCSGVAILLSFYLIY) form a helical membrane-spanning segment. Asn26 carries an N-linked (GlcNAc...) asparagine glycan. A run of 5 helical transmembrane segments spans residues 39–59 (ILIM…FVEL), 73–93 (YVLY…FDLV), 127–147 (FVLQ…VLET), 162–182 (YVWL…FLVL), and 206–226 (ILFF…FGVI). The N-linked (GlcNAc...) asparagine glycan is linked to Asn236. The helical transmembrane segment at 241–261 (LQDFITCVEMVILAICHHFFF) threads the bilayer. Asn301 and Asn304 each carry an N-linked (GlcNAc...) asparagine glycan. The segment at 327–351 (HNHPTTKKKDEESNLLEPEDKDIII) is disordered. Over residues 339-351 (SNLLEPEDKDIII) the composition is skewed to acidic residues.

Belongs to the TMEM184 family.

The protein resides in the cell membrane. Functionally, probable transporter. The protein is Transmembrane protein 184 homolog DDB_G0279555 (tmem184C) of Dictyostelium discoideum (Social amoeba).